Consider the following 208-residue polypeptide: MSGCGPWLPHDLLWGMTPAQLPGDAPAWAHAVLEAGQPVVVRRALTAPGQVAVGLRGVSREQRYPALLDLQAVQRGVRPEQLCHVPPQGPWPALQALQHLRDELDAQEWIWGVSGSAGFELASGVAALHQHSDLDLILRTPELLPRARARELLALLDGAGCPVDMQLQVPGGALALREWAGPAARVLLKSASGARLVSDPWNPQEQAA.

Active-site residues include Asp133 and Asp135.

The protein belongs to the MdcG family.

The catalysed reaction is apo-[malonate decarboxylase ACP] + 2'-(5''-triphospho-alpha-D-ribosyl)-3'-dephospho-CoA = holo-[malonate decarboxylase ACP] + diphosphate. Functionally, transfers 2'-(5-triphosphoribosyl)-3'-dephosphocoenzyme-A to the apo-[acyl-carrier-protein] of the malonate decarboxylase to yield holo-[acyl-carrier-protein]. This chain is Phosphoribosyl-dephospho-CoA transferase, found in Pseudomonas fluorescens (strain ATCC BAA-477 / NRRL B-23932 / Pf-5).